We begin with the raw amino-acid sequence, 141 residues long: Vesicle-associated membrane protein 4 (141 aa).

The segment at 1–51 (MPPKFKRHLNDDDVTGSVKSERRNLLEDDSDEEEDFFLRGPSGPRFGPRND) is disordered. At 1–118 (MPPKFKRHLN…MWWRGCKIKA (118 aa)) the chain is on the cytoplasmic side. Phosphoserine is present on residues S17 and S30. In terms of domain architecture, v-SNARE coiled-coil homology spans 52–112 (KIKHVQNQVD…KQLRRQMWWR (61 aa)). The chain crosses the membrane as a helical; Anchor for type IV membrane protein span at residues 119–139 (IMALAAAILLLMIIILIVVKF). Residues 140–141 (RT) are Vesicular-facing.

Belongs to the synaptobrevin family. Identified in a complex containing STX6, STX12, VAMP4 and VTI1A. Interacts with BAIAP3; this interaction is increased in the presence of calcium. (Microbial infection) Targeted and hydrolyzed by C.botulinum neurotoxin type X (BoNT/X) which hydrolyzes the 87-Arg-|-Ser-88 bond and probably inhibits neurotransmitter release. It remains unknown whether BoNT/X is ever produced, or what organisms it targets.

It is found in the golgi apparatus. The protein resides in the trans-Golgi network membrane. Its function is as follows. Involved in the pathway that functions to remove an inhibitor (probably synaptotagmin-4) of calcium-triggered exocytosis during the maturation of secretory granules. May be a marker for this sorting pathway that is critical for remodeling the secretory response of granule. This is Vesicle-associated membrane protein 4 (Vamp4) from Mus musculus (Mouse).